The sequence spans 159 residues: Large ribosomal subunit protein uL15 (159 aa).

Residues 1 to 39 form a disordered region; the sequence is MKLNELSPADGSTKKRMRVGRGVGSGKGKTAGRGVKGQN. The span at 21–35 shows a compositional bias: gly residues; it reads RGVGSGKGKTAGRGV.

The protein belongs to the universal ribosomal protein uL15 family. Part of the 50S ribosomal subunit.

Functionally, binds to the 23S rRNA. The polypeptide is Large ribosomal subunit protein uL15 (Hyphomonas neptunium (strain ATCC 15444)).